We begin with the raw amino-acid sequence, 116 residues long: NADH-ubiquinone oxidoreductase chain 3 (116 aa).

Helical transmembrane passes span 4 to 24 (IIIIVLSILAVTAALVFAAHF), 56 to 76 (FFLVAILFLLFDLEIALLFPF), and 88 to 108 (VLYIATLFLAILLIGLIFEWT).

This sequence belongs to the complex I subunit 3 family.

Its subcellular location is the mitochondrion membrane. The catalysed reaction is a ubiquinone + NADH + 5 H(+)(in) = a ubiquinol + NAD(+) + 4 H(+)(out). Functionally, core subunit of the mitochondrial membrane respiratory chain NADH dehydrogenase (Complex I) that is believed to belong to the minimal assembly required for catalysis. Complex I functions in the transfer of electrons from NADH to the respiratory chain. The immediate electron acceptor for the enzyme is believed to be ubiquinone. The sequence is that of NADH-ubiquinone oxidoreductase chain 3 (ND3) from Pisaster ochraceus (Ochre sea star).